The primary structure comprises 79 residues: Acyl carrier protein (79 aa).

In terms of domain architecture, Carrier spans 2 to 77 (DNIEQRVKKI…QAIDYATAHV (76 aa)). Position 37 is an O-(pantetheine 4'-phosphoryl)serine (Ser-37).

The protein belongs to the acyl carrier protein (ACP) family. Post-translationally, 4'-phosphopantetheine is transferred from CoA to a specific serine of apo-ACP by AcpS. This modification is essential for activity because fatty acids are bound in thioester linkage to the sulfhydryl of the prosthetic group.

It is found in the cytoplasm. The protein operates within lipid metabolism; fatty acid biosynthesis. Its function is as follows. Carrier of the growing fatty acid chain in fatty acid biosynthesis. The chain is Acyl carrier protein from Cupriavidus pinatubonensis (strain JMP 134 / LMG 1197) (Cupriavidus necator (strain JMP 134)).